Here is a 283-residue protein sequence, read N- to C-terminus: Glutamate racemase (283 aa).

Residues 7–8 and 39–40 each bind substrate; these read DS and YG. The active-site Proton donor/acceptor is the Cys-70. Position 71-72 (71-72) interacts with substrate; that stretch reads NT. The active-site Proton donor/acceptor is the Cys-206. 207–208 contributes to the substrate binding site; sequence TH.

It belongs to the aspartate/glutamate racemases family.

It catalyses the reaction L-glutamate = D-glutamate. It functions in the pathway cell wall biogenesis; peptidoglycan biosynthesis. In terms of biological role, provides the (R)-glutamate required for cell wall biosynthesis. The sequence is that of Glutamate racemase from Phenylobacterium zucineum (strain HLK1).